Reading from the N-terminus, the 377-residue chain is PqqA peptide cyclase (377 aa).

The region spanning 12–228 is the Radical SAM core domain; it reads FGIPLAVLLE…EAARERLKGQ (217 aa). Residues C26, C30, and C33 each coordinate [4Fe-4S] cluster.

It belongs to the radical SAM superfamily. PqqE family. Interacts with PqqD. The interaction is necessary for activity of PqqE. It depends on [4Fe-4S] cluster as a cofactor.

The catalysed reaction is [PQQ precursor protein] + S-adenosyl-L-methionine = E-Y cross-linked-[PQQ precursor protein] + 5'-deoxyadenosine + L-methionine + H(+). The protein operates within cofactor biosynthesis; pyrroloquinoline quinone biosynthesis. Its function is as follows. Catalyzes the cross-linking of a glutamate residue and a tyrosine residue in the PqqA protein as part of the biosynthesis of pyrroloquinoline quinone (PQQ). The protein is PqqA peptide cyclase of Rhodopseudomonas palustris (strain ATCC BAA-98 / CGA009).